The primary structure comprises 301 residues: UDP-N-acetylenolpyruvoylglucosamine reductase (301 aa).

One can recognise an FAD-binding PCMH-type domain in the interval 30–194 (VGGEADYLVF…LSVKFALAPG (165 aa)). Arginine 173 is a catalytic residue. Residue serine 223 is the Proton donor of the active site. Glutamate 293 is an active-site residue.

The protein belongs to the MurB family. FAD is required as a cofactor.

Its subcellular location is the cytoplasm. It catalyses the reaction UDP-N-acetyl-alpha-D-muramate + NADP(+) = UDP-N-acetyl-3-O-(1-carboxyvinyl)-alpha-D-glucosamine + NADPH + H(+). It functions in the pathway cell wall biogenesis; peptidoglycan biosynthesis. In terms of biological role, cell wall formation. The sequence is that of UDP-N-acetylenolpyruvoylglucosamine reductase from Streptococcus pneumoniae (strain JJA).